A 55-amino-acid chain; its full sequence is MAGTANCIDILIAIILPPLGVFLKFGCGHEFWICLLLTFLGYIPGIIYAIYAITK.

2 helical membrane-spanning segments follow: residues 8–28 (IDILIAIILPPLGVFLKFGCG) and 31–51 (FWICLLLTFLGYIPGIIYAIY).

It belongs to the UPF0057 (PMP3) family.

The protein localises to the membrane. Functionally, plays a role in the regulation of membrane potential. Could mediate a proton leak. This chain is Hydrophobic protein LTI6B (LTI6B), found in Oryza sativa subsp. indica (Rice).